The chain runs to 328 residues: Lipoyl synthase (328 aa).

Positions 56, 61, 67, 82, 86, 89, and 298 each coordinate [4Fe-4S] cluster. Residues 68 to 287 (WEDREATFLI…KEEAEEIGFS (220 aa)) enclose the Radical SAM core domain.

This sequence belongs to the radical SAM superfamily. Lipoyl synthase family. The cofactor is [4Fe-4S] cluster.

It is found in the cytoplasm. It carries out the reaction [[Fe-S] cluster scaffold protein carrying a second [4Fe-4S](2+) cluster] + N(6)-octanoyl-L-lysyl-[protein] + 2 oxidized [2Fe-2S]-[ferredoxin] + 2 S-adenosyl-L-methionine + 4 H(+) = [[Fe-S] cluster scaffold protein] + N(6)-[(R)-dihydrolipoyl]-L-lysyl-[protein] + 4 Fe(3+) + 2 hydrogen sulfide + 2 5'-deoxyadenosine + 2 L-methionine + 2 reduced [2Fe-2S]-[ferredoxin]. It functions in the pathway protein modification; protein lipoylation via endogenous pathway; protein N(6)-(lipoyl)lysine from octanoyl-[acyl-carrier-protein]: step 2/2. Catalyzes the radical-mediated insertion of two sulfur atoms into the C-6 and C-8 positions of the octanoyl moiety bound to the lipoyl domains of lipoate-dependent enzymes, thereby converting the octanoylated domains into lipoylated derivatives. This Streptomyces avermitilis (strain ATCC 31267 / DSM 46492 / JCM 5070 / NBRC 14893 / NCIMB 12804 / NRRL 8165 / MA-4680) protein is Lipoyl synthase.